A 546-amino-acid polypeptide reads, in one-letter code: uncharacterized protein (546 aa).

It belongs to the IIV-6 098R family.

This is an uncharacterized protein from Aedes vexans (Inland floodwater mosquito).